Consider the following 124-residue polypeptide: UPF0375 protein Y45F10C.4 (124 aa).

The first 23 residues, 1–23 (MNFLPSTVLLLSFVVAIISGSFS), serve as a signal peptide directing secretion. Asparagine 36 and asparagine 62 each carry an N-linked (GlcNAc...) asparagine glycan.

Belongs to the UPF0375 family.

It localises to the secreted. The polypeptide is UPF0375 protein Y45F10C.4 (Caenorhabditis elegans).